Here is a 170-residue protein sequence, read N- to C-terminus: NADH-quinone oxidoreductase subunit B (170 aa).

Residues cysteine 37, cysteine 38, cysteine 102, and cysteine 131 each contribute to the [4Fe-4S] cluster site.

The protein belongs to the complex I 20 kDa subunit family. NDH-1 is composed of 14 different subunits. Subunits NuoB, C, D, E, F, and G constitute the peripheral sector of the complex. [4Fe-4S] cluster serves as cofactor.

Its subcellular location is the cell inner membrane. It catalyses the reaction a quinone + NADH + 5 H(+)(in) = a quinol + NAD(+) + 4 H(+)(out). NDH-1 shuttles electrons from NADH, via FMN and iron-sulfur (Fe-S) centers, to quinones in the respiratory chain. The immediate electron acceptor for the enzyme in this species is believed to be ubiquinone. Couples the redox reaction to proton translocation (for every two electrons transferred, four hydrogen ions are translocated across the cytoplasmic membrane), and thus conserves the redox energy in a proton gradient. This Geobacter sulfurreducens (strain ATCC 51573 / DSM 12127 / PCA) protein is NADH-quinone oxidoreductase subunit B.